The primary structure comprises 117 residues: Large ribosomal subunit protein uL23 (117 aa).

The protein belongs to the universal ribosomal protein uL23 family. Part of the 50S ribosomal subunit. Contacts protein L29, and trigger factor when it is bound to the ribosome.

One of the early assembly proteins it binds 23S rRNA. One of the proteins that surrounds the polypeptide exit tunnel on the outside of the ribosome. Forms the main docking site for trigger factor binding to the ribosome. The chain is Large ribosomal subunit protein uL23 from Ruminiclostridium cellulolyticum (strain ATCC 35319 / DSM 5812 / JCM 6584 / H10) (Clostridium cellulolyticum).